The chain runs to 371 residues: Peptide chain release factor 2 (371 aa).

Glutamine 251 is subject to N5-methylglutamine.

Belongs to the prokaryotic/mitochondrial release factor family. Post-translationally, methylated by PrmC. Methylation increases the termination efficiency of RF2.

The protein localises to the cytoplasm. Peptide chain release factor 2 directs the termination of translation in response to the peptide chain termination codons UGA and UAA. The sequence is that of Peptide chain release factor 2 from Pseudarthrobacter chlorophenolicus (strain ATCC 700700 / DSM 12829 / CIP 107037 / JCM 12360 / KCTC 9906 / NCIMB 13794 / A6) (Arthrobacter chlorophenolicus).